We begin with the raw amino-acid sequence, 185 residues long: Phosphatidylglycerophosphatase GEP4, mitochondrial (185 aa).

Positions aspartate 45–cysteine 49 match the Phosphoryl acceptor motif.

Belongs to the GEP4 family.

Its subcellular location is the mitochondrion inner membrane. It carries out the reaction a 1,2-diacyl-sn-glycero-3-phospho-(1'-sn-glycero-3'-phosphate) + H2O = a 1,2-diacyl-sn-glycero-3-phospho-(1'-sn-glycerol) + phosphate. Its pathway is phospholipid metabolism; phosphatidylglycerol biosynthesis; phosphatidylglycerol from CDP-diacylglycerol: step 2/2. In terms of biological role, phosphatidylglycerophosphatase involved in the biosynthesis of cardiolipin (CL), a unique dimeric phosphoglycerolipid predominantly present in mitochondrial membranes and which has important functions for cellular energy metabolism, mitochondrial dynamics and the initiation of apoptotic pathways. Required for the stability of respiratory chain supercomplexes and for growth at elevated temperature, in presence of ethidium bromide or in absence of prohibitins. The protein is Phosphatidylglycerophosphatase GEP4, mitochondrial (GEP4) of Saccharomyces cerevisiae (strain ATCC 204508 / S288c) (Baker's yeast).